A 72-amino-acid polypeptide reads, in one-letter code: Translation initiation factor IF-1 (72 aa).

Residues 1–72 (MSKEDMIEFS…TKGRITFRFK (72 aa)) form the S1-like domain.

The protein belongs to the IF-1 family. Component of the 30S ribosomal translation pre-initiation complex which assembles on the 30S ribosome in the order IF-2 and IF-3, IF-1 and N-formylmethionyl-tRNA(fMet); mRNA recruitment can occur at any time during PIC assembly.

Its subcellular location is the cytoplasm. Functionally, one of the essential components for the initiation of protein synthesis. Stabilizes the binding of IF-2 and IF-3 on the 30S subunit to which N-formylmethionyl-tRNA(fMet) subsequently binds. Helps modulate mRNA selection, yielding the 30S pre-initiation complex (PIC). Upon addition of the 50S ribosomal subunit IF-1, IF-2 and IF-3 are released leaving the mature 70S translation initiation complex. The polypeptide is Translation initiation factor IF-1 (Granulibacter bethesdensis (strain ATCC BAA-1260 / CGDNIH1)).